The chain runs to 817 residues: Protein EFR3 homolog B (817 aa).

A phosphoserine mark is found at serine 212, serine 214, and serine 216.

The protein belongs to the EFR3 family. As to quaternary structure, component of a phosphatidylinositol 4-kinase (PI4K) complex, composed of PI4KA, EFR3 (EFR3A or EFR3B), TTC7 (TTC7A or TTC7B) and HYCC (HYCC1 or HYCC2). Post-translationally, palmitoylated at its N-terminus, anchoring the protein to the plasma membrane.

Its subcellular location is the cell membrane. The protein localises to the cytoplasm. It localises to the cytosol. Functionally, component of a complex required to localize phosphatidylinositol 4-kinase (PI4K) to the plasma membrane. The complex acts as a regulator of phosphatidylinositol 4-phosphate (PtdIns(4)P) synthesis. In the complex, EFR3B probably acts as the membrane-anchoring component. Also involved in responsiveness to G-protein-coupled receptors; it is however unclear whether this role is direct or indirect. The sequence is that of Protein EFR3 homolog B from Homo sapiens (Human).